A 105-amino-acid chain; its full sequence is Pyruvate synthase subunit PorD (105 aa).

4Fe-4S ferredoxin-type domains are found at residues 44 to 73 (FKPE…LDEE) and 74 to 103 (GYPV…MVRE). Positions 53, 56, 59, 63, 83, 86, 89, and 93 each coordinate [4Fe-4S] cluster.

Heterotetramer of one alpha, one beta, one delta and one gamma chain. It depends on [4Fe-4S] cluster as a cofactor.

This chain is Pyruvate synthase subunit PorD (porD), found in Pyrococcus horikoshii (strain ATCC 700860 / DSM 12428 / JCM 9974 / NBRC 100139 / OT-3).